Consider the following 170-residue polypeptide: MIIERLIGNLRDLNPLDFSVDYVDLEWFETRKKIARFKTRQGKDIAIRLKDAPKLGLSQGDILFKEEKEIIAVNILDSEVIHIQAKSVAEVAKICYEIGNRHAALYYGESQFEFKTPFEKPTLALLEKLGVQNHVLSSKLDSKDRLTVSMPHSEPNFKVSLASDFKVVMK.

This sequence belongs to the UreE family.

The protein resides in the cytoplasm. In terms of biological role, involved in urease metallocenter assembly. Binds nickel. Probably functions as a nickel donor during metallocenter assembly. This is Urease accessory protein UreE from Helicobacter pylori (strain Shi470).